The following is a 232-amino-acid chain: Adenosylcobinamide-GDP ribazoletransferase (232 aa).

6 helical membrane passes run 31–51, 59–79, 102–122, 126–146, 167–187, and 209–229; these read LPSF…LGAL, VFFL…GFLD, VGPF…NLYL, PFYF…LMAF, LLIS…YIIS, and VTGD…LLIL.

This sequence belongs to the CobS family. Mg(2+) serves as cofactor.

Its subcellular location is the cell inner membrane. The enzyme catalyses alpha-ribazole + adenosylcob(III)inamide-GDP = adenosylcob(III)alamin + GMP + H(+). The catalysed reaction is alpha-ribazole 5'-phosphate + adenosylcob(III)inamide-GDP = adenosylcob(III)alamin 5'-phosphate + GMP + H(+). Its pathway is cofactor biosynthesis; adenosylcobalamin biosynthesis; adenosylcobalamin from cob(II)yrinate a,c-diamide: step 7/7. Functionally, joins adenosylcobinamide-GDP and alpha-ribazole to generate adenosylcobalamin (Ado-cobalamin). Also synthesizes adenosylcobalamin 5'-phosphate from adenosylcobinamide-GDP and alpha-ribazole 5'-phosphate. This Thermosipho africanus (strain TCF52B) protein is Adenosylcobinamide-GDP ribazoletransferase.